We begin with the raw amino-acid sequence, 977 residues long: Ephrin type-A receptor 1 (977 aa).

The first 26 residues, 1-26, serve as a signal peptide directing secretion; it reads MERRWPLGLALLLLLLCAPLPPGARA. The Extracellular portion of the chain corresponds to 27–548; sequence EEVTLMDTST…PVSRSLTGGE (522 aa). Residues 28 to 210 form the Eph LBD domain; it reads EVTLMDTSTA…FYQRCAETVH (183 aa). Fibronectin type-III domains are found at residues 333–446 and 448–539; these read PPSA…MGHA and SLSG…TSPP. Asn-415 and Asn-479 each carry an N-linked (GlcNAc...) asparagine glycan. The helical transmembrane segment at 549 to 569 threads the bilayer; it reads IVAVIFGLLLGIALLIGIYVF. Residues 570–977 lie on the Cytoplasmic side of the membrane; it reads RSRRGQRQRQ…ILCSIQGFKD (408 aa). 2 positions are modified to phosphotyrosine; by autocatalysis: Tyr-600 and Tyr-606. One can recognise a Protein kinase domain in the interval 625 to 885; the sequence is LIVDTVIGEG…QLQAHLEQLL (261 aa). ATP is bound by residues 631-639 and Lys-657; that span reads IGEGEFGEV. Asp-750 (proton acceptor) is an active-site residue. A Phosphotyrosine; by autocatalysis modification is found at Tyr-782. Phosphoserine is present on residues Ser-907 and Ser-911. Residues 914–977 form the SAM domain; sequence IPYRSVSEWL…ILCSIQGFKD (64 aa). Residues 975–977 carry the PDZ-binding motif; that stretch reads FKD.

Belongs to the protein kinase superfamily. Tyr protein kinase family. Ephrin receptor subfamily. In terms of assembly, homodimer. Forms a signaling complex with LCK; PTK2B/PYK2 and PI3-kinase upon activation by EFNA1; regulates T-lymphocytes migration. Interacts (via SAM domain) with ILK (via ANK repeats); stimulated by EFNA1 but independent of the kinase activity of EPHA1. Interacts (kinase activity-dependent) with PTK2/FAK1. Phosphorylated. Autophosphorylation is stimulated by its ligand EFNA1. Post-translationally, ubiquitinated. Preferentially expressed in epithelial cells including skin, kidney, liver and thymus. Expressed in myogenic progenitor cells.

It is found in the cell membrane. It carries out the reaction L-tyrosyl-[protein] + ATP = O-phospho-L-tyrosyl-[protein] + ADP + H(+). Functionally, receptor tyrosine kinase which binds promiscuously membrane-bound ephrin-A family ligands residing on adjacent cells, leading to contact-dependent bidirectional signaling into neighboring cells. The signaling pathway downstream of the receptor is referred to as forward signaling while the signaling pathway downstream of the ephrin ligand is referred to as reverse signaling. Binds with a low affinity EFNA3 and EFNA4 and with a high affinity to EFNA1 which most probably constitutes its cognate/functional ligand. Upon activation by EFNA1 induces cell attachment to the extracellular matrix inhibiting cell spreading and motility through regulation of ILK and downstream RHOA and RAC. Also plays a role in angiogenesis and regulates cell proliferation. May play a role in apoptosis. The chain is Ephrin type-A receptor 1 (Epha1) from Mus musculus (Mouse).